The following is a 1700-amino-acid chain: Rho guanine nucleotide exchange factor 28 (1700 aa).

The interval Thr288–Arg343 is disordered. Ser312 and Ser314 each carry phosphoserine. Basic and acidic residues predominate over residues Pro330–Arg343. Ser478 is modified (phosphoserine). The segment at Val483 to Thr532 is disordered. Ser623 is modified (phosphoserine). Residues Arg651–Cys698 form a Phorbol-ester/DAG-type zinc finger. One can recognise a DH domain in the interval Lys846 to Lys1041. The PH domain occupies Ala1095 to Val1184. 2 disordered regions span residues Val1184 to Ala1205 and Lys1289 to Thr1328. Positions Glu1191–Ala1205 are enriched in basic and acidic residues. Positions Asp1292 to Pro1301 are interaction with PTK2/FAK1; required for regulation of axonal branching and synapse formation. Over residues Thr1309 to Thr1325 the composition is skewed to polar residues. Residues Ile1369–Leu1380 are mediates cytoplasmic retention and interaction with YWHAH. The stretch at Gln1421–Gln1522 forms a coiled coil. The interaction with microtubules stretch occupies residues Gln1421–Leu1700. An RNA-binding region spans residues Gln1493–Leu1524. Ser1535 bears the Phosphoserine mark. The tract at residues Phe1563 to Ser1576 is mediates cytoplasmic retention and interaction with MAPK8IP1. Positions Ser1602–Leu1700 are disordered. Ser1604 carries the post-translational modification Phosphoserine. The span at Asp1647–Gln1663 shows a compositional bias: low complexity. A compositionally biased stretch (polar residues) spans Arg1664–Ala1675.

Homooligomer; forms some cytoplasmic aggregates. Forms a complex with MAPK8 and MAPK8IP1. Interacts with RHOA. Interacts with microtubules. Interacts with YWHAE and YWHAH. Interacts with PTK2/FAK1. Interacts with NEFL. Interacts with CTNND2; prevents interaction with RHOA. In terms of processing, phosphorylated on tyrosine upon stimulation of cells by laminin. As to expression, highly enriched in the brain (at protein level). Also detected in lung and kidney.

It is found in the cytoplasm. Its subcellular location is the cell membrane. Its function is as follows. Functions as a RHOA-specific guanine nucleotide exchange factor regulating signaling pathways downstream of integrins and growth factor receptors. Functions in axonal branching, synapse formation and dendritic morphogenesis. Also functions in focal adhesion formation, cell motility and B-lymphocytes activation. May regulate NEFL expression and aggregation and play a role in apoptosis. This is Rho guanine nucleotide exchange factor 28 (Arhgef28) from Mus musculus (Mouse).